The primary structure comprises 126 residues: Large ribosomal subunit protein bL12 (126 aa).

Belongs to the bacterial ribosomal protein bL12 family. In terms of assembly, homodimer. Part of the ribosomal stalk of the 50S ribosomal subunit. Forms a multimeric L10(L12)X complex, where L10 forms an elongated spine to which 2 to 4 L12 dimers bind in a sequential fashion. Binds GTP-bound translation factors.

Functionally, forms part of the ribosomal stalk which helps the ribosome interact with GTP-bound translation factors. Is thus essential for accurate translation. The polypeptide is Large ribosomal subunit protein bL12 (Bordetella petrii (strain ATCC BAA-461 / DSM 12804 / CCUG 43448)).